The following is a 304-amino-acid chain: Peptidyl-prolyl cis-trans isomerase FKBP35 (304 aa).

One can recognise a PPIase FKBP-type domain in the interval 37 to 126 (GNEVTVHYVG…LFEIELLSFR (90 aa)). 3 TPR repeats span residues 144 to 177 (AFDI…FIHT), 194 to 227 (ISCN…DKNN), and 228 to 261 (VKAL…NPNN).

The protein belongs to the FKBP-type PPIase family. As to quaternary structure, homodimer. Interacts (via TPR repeats) with HSP90 (probably via MEEVD motif).

Its subcellular location is the cytoplasm. The protein localises to the nucleus. The enzyme catalyses [protein]-peptidylproline (omega=180) = [protein]-peptidylproline (omega=0). With respect to regulation, inhibited by FK506 and its derivates, such as ascomycin, and rapamycin. FK506 and rapamycin inhibit peptidylprolyl isomerase activity but not chaperone activity. Inhibited by N-(2-ethyl-phenyl)-2-(3H-imidazao [4, 5-b] pyridin-2-yl-sulfanyl)-acetamide (D44). Not inhibited by cyclosporin A. Inhibition of calcineurin phosphatase activity is enhanced by FK506. Its function is as follows. Has peptidylprolyl isomerase (PPIase) and co-chaperone activities. Assists protein folding by catalyzing the peptidyl conversion of cis and trans rotamers of the prolyl amide bond of protein substrates. Inhibits calcineurin phosphatase activity in vitro. Plays an essential role in merozoite egress from host erythrocytes. This is Peptidyl-prolyl cis-trans isomerase FKBP35 from Plasmodium falciparum (isolate 3D7).